Here is a 2435-residue protein sequence, read N- to C-terminus: Highly reducing polyketide synthase ATR6 (2435 aa).

In terms of domain architecture, Ketosynthase family 3 (KS3) spans 18–450 (AEPIAIVSAA…GSNAHVVLDN (433 aa)). Residues Cys-192, His-331, and His-371 each act as for beta-ketoacyl synthase activity in the active site. The malonyl-CoA:ACP transacylase (MAT) domain stretch occupies residues 586–883 (FVFTGQGAQW…EIGPSAALGG (298 aa)). Catalysis depends on Ser-682, which acts as the For malonyltransferase activity. The tract at residues 979–1125 (HDLLGGKVLG…GLVRLALNAS (147 aa)) is N-terminal hotdog fold. Residues 979-1291 (HDLLGGKVLG…LRGISMTSVG (313 aa)) form a dehydratase (DH) domain region. Residues 979-1296 (HDLLGGKVLG…MTSVGLQGNV (318 aa)) form the PKS/mFAS DH domain. Catalysis depends on His-1011, which acts as the For beta-hydroxyacyl dehydratase activity. The interval 1141 to 1296 (QYPTPARFWY…MTSVGLQGNV (156 aa)) is C-terminal hotdog fold. The tract at residues 1724–2037 (GILDTLHFAE…DHNRLRNVVI (314 aa)) is enoylreductase (ER) domain. The tract at residues 2062 to 2301 (PEQTYLLVGK…ITGIAVPQPG (240 aa)) is catalytic ketoreductase (KRc) domain. In terms of domain architecture, Carrier spans 2353 to 2429 (VLLSSAVGVL…VLCQKIISRM (77 aa)). Ser-2389 is modified (O-(pantetheine 4'-phosphoryl)serine).

It functions in the pathway mycotoxin biosynthesis. Its function is as follows. Highly reducing polyketide synthase; part of the core atranone cluster (CAC) which products are predicted to catalyze most or all steps of mycotoxin atranone synthesis, starting from geranylgeranyl pyrophosphate (GGPP). The initial cyclization of GGPP to dolabellane is probably performed by the terpene cyclase ATR13. The Baeyer-Villiger oxidation near the end of the atranone synthesis, which converts atranones D and E to atranones F and G is predicted to be catalyzed by the monooxygenase ATR8. Of the CAC's other predicted gene products, the reducing PKS ATR6 might synthesize a polyketide chain. This polyketide is probably transferred onto the atranone backbone by the polyketide transferase ATR5. Other predicted CAC products include 4 oxygenases (ATR2, ATR3, ATR4, and ATR14), 3 short-chain reductases (ATR7, ATR9, and ATR10), and a methyltransferase (ATR12). These may all be involved in the various steps of atranone biosynthesis, although their specific roles must await experimental determination. In Stachybotrys chlorohalonatus (strain IBT 40285), this protein is Highly reducing polyketide synthase ATR6.